The following is a 436-amino-acid chain: GTPase Der (436 aa).

2 EngA-type G domains span residues 4 to 167 (PTVA…PVEE) and 175 to 351 (IRFS…ESQN). Residues 10 to 17 (GRPNVGKS), 57 to 61 (DTGGI), 119 to 122 (NKVD), 181 to 188 (GRPNVGKS), 229 to 233 (DTAGM), and 294 to 297 (NKWD) contribute to the GTP site. The KH-like domain occupies 352–436 (KRIPSAVLND…PIHLIARKRK (85 aa)).

Belongs to the TRAFAC class TrmE-Era-EngA-EngB-Septin-like GTPase superfamily. EngA (Der) GTPase family. As to quaternary structure, associates with the 50S ribosomal subunit.

In terms of biological role, GTPase that plays an essential role in the late steps of ribosome biogenesis. The chain is GTPase Der from Streptococcus uberis (strain ATCC BAA-854 / 0140J).